The primary structure comprises 355 residues: Protein-glutamate methylesterase/protein-glutamine glutaminase (355 aa).

The 117-residue stretch at 7-123 folds into the Response regulatory domain; that stretch reads AAVVVDDSQF…SVGIKQQQDE (117 aa). D57 is subject to 4-aspartylphosphate. A disordered region spans residues 139 to 159; that stretch reads TEAAAERTTSTATSTTTSRSA. The CheB-type methylesterase domain maps to 161-355; the sequence is EYVDKPTLVI…DGVLDTIMRE (195 aa). Active-site residues include S173, H200, and D297.

Belongs to the CheB family. Post-translationally, phosphorylated by CheA. Phosphorylation of the N-terminal regulatory domain activates the methylesterase activity.

The protein localises to the cytoplasm. It catalyses the reaction [protein]-L-glutamate 5-O-methyl ester + H2O = L-glutamyl-[protein] + methanol + H(+). It carries out the reaction L-glutaminyl-[protein] + H2O = L-glutamyl-[protein] + NH4(+). Functionally, involved in chemotaxis. Part of a chemotaxis signal transduction system that modulates chemotaxis in response to various stimuli. Catalyzes the demethylation of specific methylglutamate residues introduced into the chemoreceptors (methyl-accepting chemotaxis proteins or MCP) by CheR. Also mediates the irreversible deamidation of specific glutamine residues to glutamic acid. This chain is Protein-glutamate methylesterase/protein-glutamine glutaminase, found in Natronomonas pharaonis (strain ATCC 35678 / DSM 2160 / CIP 103997 / JCM 8858 / NBRC 14720 / NCIMB 2260 / Gabara) (Halobacterium pharaonis).